We begin with the raw amino-acid sequence, 196 residues long: HTH-type transcriptional regulator BetI (196 aa).

One can recognise an HTH tetR-type domain in the interval 8–68 (EVRRAQLIDA…ATMRHILRDL (61 aa)). A DNA-binding region (H-T-H motif) is located at residues 31–50 (TLASVAQRANISTGIVSHYF).

Its pathway is amine and polyamine biosynthesis; betaine biosynthesis via choline pathway [regulation]. In terms of biological role, repressor involved in the biosynthesis of the osmoprotectant glycine betaine. It represses transcription of the choline transporter BetT and the genes of BetAB involved in the synthesis of glycine betaine. This Paraburkholderia phymatum (strain DSM 17167 / CIP 108236 / LMG 21445 / STM815) (Burkholderia phymatum) protein is HTH-type transcriptional regulator BetI.